Here is a 178-residue protein sequence, read N- to C-terminus: Bifunctional protein PyrR (178 aa).

The PRPP-binding motif lies at 97–109 (VVLVDDVLYTGRT).

The protein belongs to the purine/pyrimidine phosphoribosyltransferase family. PyrR subfamily.

It catalyses the reaction UMP + diphosphate = 5-phospho-alpha-D-ribose 1-diphosphate + uracil. Regulates the transcription of the pyrimidine nucleotide (pyr) operon in response to exogenous pyrimidines. Its function is as follows. Also displays a weak uracil phosphoribosyltransferase activity which is not physiologically significant. This is Bifunctional protein PyrR from Herpetosiphon aurantiacus (strain ATCC 23779 / DSM 785 / 114-95).